A 234-amino-acid polypeptide reads, in one-letter code: Thymidine kinase, cytosolic (234 aa).

Ser-2 is subject to N-acetylserine. Ser-2 and Ser-13 each carry phosphoserine. ATP contacts are provided by residues 26-33 (GPMFSGKS), 58-60 (DTR), and 97-100 (DEGQ). Glu-98 functions as the Proton acceptor in the catalytic mechanism. Substrate is bound at residue Phe-128. The Zn(2+) site is built by Cys-153 and Cys-156. Substrate contacts are provided by residues 172–176 (VEVIG) and Tyr-181. Zn(2+)-binding residues include Cys-185 and Cys-188. A KEN box motif is present at residues 203 to 205 (KEN). The residue at position 231 (Ser-231) is a Phosphoserine.

Belongs to the thymidine kinase family. As to quaternary structure, homotetramer. Tetramerization from dimerization is induced by ATP and increases catalytic efficiency due to a high affinity for thymidine. Tetramerization is inhibited by phosphorylation at Ser-13. Interacts (via the KEN box) with FZR1. Phosphorylated on Ser-13 in mitosis. Phosphorylation of Ser-13 by CDK1 during mitosis reduces homotetramerization and catalytic efficiency when DNA replication is complete and intracellular TK1 is still present at a high level. In terms of processing, polyubiquitinated. Postmitosis, ubiquitination leads to proteasomal degradation. The KEN box sequence located at the C-terminal region targets for degradation by the anaphase promoting complex (APC/C) activated and rate-limited by FZR1.

It localises to the cytoplasm. It catalyses the reaction thymidine + ATP = dTMP + ADP + H(+). In terms of biological role, cell-cycle-regulated enzyme of importance in nucleotide metabolism. Catalyzes the first enzymatic step in the salvage pathway converting thymidine into thymidine monophosphate. Transcriptional regulation limits expression to the S phase of the cell cycle and transient expression coincides with the oscillation in the intracellular dTTP concentration. Also important for the activation of anticancer and antiviral nucleoside analog prodrugs such as 1-b-d-arabinofuranosylcytosine (AraC) and 3c-azido-3c-deoxythymidine (AZT). This Homo sapiens (Human) protein is Thymidine kinase, cytosolic.